The primary structure comprises 521 residues: Amidase (521 aa).

Active-site charge relay system residues include K96 and S171. The interval S155 to G174 is disordered. S195 serves as the catalytic Acyl-ester intermediate.

Belongs to the amidase family. As to quaternary structure, homodimer.

It carries out the reaction a monocarboxylic acid amide + H2O = a monocarboxylate + NH4(+). Functionally, hydrolyzes propionamides efficiently, and also at a lower efficiency, acetamide, acrylamide and indoleacetamide. This enzyme seems to be stereospecific and can lead to the production of a single enantiomer. This chain is Amidase (amdA), found in Rhodococcus erythropolis (Arthrobacter picolinophilus).